The following is a 448-amino-acid chain: FAD-dependent monooxygenase srdH (448 aa).

Glutamate 32 and arginine 107 together coordinate FAD. The active site involves glutamine 227. FAD is bound at residue aspartate 313.

This sequence belongs to the paxM FAD-dependent monooxygenase family. The cofactor is FAD.

Its function is as follows. Highly reducing polyketide synthase; part of the gene cluster that mediates the biosynthesis of sordarial, a salicylic aldehyde structurally related to the phytotoxin pyriculol. The most interesting aspect of this pathway is formation of an aromatic product from the highly reducing polyketide synthase srdA. SrdA synthesizes a reduced polyketide chain from one molecule of acetyl-CoA and five molecules of malonyl-CoA. The polyketide chain is then reductively released as an aldehyde. The oxidoreductases srdC, srdD and srdE then oxidize one of the hydroxy groups to facilitate the intramolecular aldol condensation, followed by dehydration to yield a salicylic aldehyde. This aldehyde can undergo facile reduction by endogenous reductases to yield the alcohol 1-hydroxy-2-hydroxymethyl-3-pent-1,3-dienylbenzene. The flavin-dependent srdI counteract against the propensity of the aldehydes to be reduced under physiological conditions and is responsible for reoxidizing 1-hydroxy-2-hydroxymethyl-3-pent-1,3-dienylbenzene back to the salicylic aldehyde. This salicylic aldehyde is then selectively epoxidized by the cupin-domain-containing oxidoreductase srdB to yield the epoxide, which can be hydrolyzed stereoselectively by the hydrolase srdG to give the final product sordarial. The protein is FAD-dependent monooxygenase srdH of Neurospora crassa (strain ATCC 24698 / 74-OR23-1A / CBS 708.71 / DSM 1257 / FGSC 987).